The following is a 1499-amino-acid chain: MMMARKQDVRIPTYNISVVGLSGTEKEKGQCGIGKSCLCNRFVRPSADEFHLDHTSVLSTSDFGGRVVNNDHFLYWGEVSRSLEDCVECKMHIVEQTEFIDDQTFQPHRSTALQPYIKRAAATKLASAEKLMYFCTDQLGLEQDFEQKQMPDGKLLVDGFLLGIDVSRGMNRNFDDQLKFVSNLYNQLAKTKKPIVVVLTKCDEGVERYIRDAHTFALSKKNLQVVETSARSNVNVDLAFSTLVQLIDKSRGKTKIIPYFEALKQQSQQIATAKDKYEWLVSRIVKNHNENWPSVSRKMQASPEYQDYVYLEGTQKAKKLFLQHIHRLKHEHIERRRKLYLAALPLAFEALIPNLDEVDHLSCIKAKKLLETKPEFLKWFVVLEETPWDATSHIDNMENERIPFDLMDTVPAEQLYETHLEKLRNERKRAEMRRAFKENLETSPFITPGKPWEEARSFIMNEDFYQWLEESVYMDIYGKHQKQIIDRAKEEFQELLLEYSELFYELELDAKPSKEKMGVIQDVLGEEQRFKALQKLQAERDALILKHIHFVYHPTKETCPSCPACVDAKIEHLISSRFIRPSDRNQKNSLSDLNIDRINLVILGKDGLARELANEIRALCTNDDKYVIDGKMYELSLRPIEGNVRLPVNSFQTPTFQPHGCLCLYNSKESLSYVVESIEKSRESTLGRRDNHLVHLPLTLILVNKRGDTSGETLHSLIQQGQQIASKLQCVFLDPASAGIGYGRNINEKQISQVLKGLLDSKRNLNLVSSTASIKDLADVDLRIVMCLMCGDPFSADDVLSPVLQSQTCKSSHCGSSNSVLLELPIGLHKKRIELSVLSYHSSFSIRKSRLVHGYIVFYSAKRKASLAMLRAFLCEVQDIIPIQLVALTDGAIDVLDNDLSREQLTEGEEIAQEIDGRFTSIPCSQPQHKLELFHPFFKDVVEKKNIIEATHMYDNVAEACSTTEEVFNSPRAGSPLCNSNLQDSEEDVEPPSYHLFREDATLPSLSKDHSKFSMELEGNDGLSFIMSNFESKLNNKVPPPVKPKPPVHFDITKDLSYLDQGHREGQRKSMSSSPWMPQDGFDPSDYAEPMDAVVKPRNEEENIYSVPHDSTQGKIITIRNINKAQSNGSGNGSDSEMDTSSLERGRKVSAVSKPVLYRTRCTRLGRFASYRTSFSVGSDDELGPIRKKEEDQASQGYKGDNAVIPYETDEDPRRRNILRSLRRNTKKPKPKPRPSITKATWESNYFGVPLTTVVTPEKPIPIFIERCIEYIEATGLSTEGIYRVSGNKSEMESLQRQFDQDHNLDLAEKDFTVNTVAGAMKSFFSELPDPLVPYSMQIDLVEAHKINDREQKLHALKEVLKKFPKENHEVFKYVISHLNKVSHNNKVNLMTSENLSICFWPTLMRPDFSSMDALTATRSYQTIIELFIQQCPFFFYNRPISEPPGAAPGSPSAMAPTVPFLTSTPATSQPSPPQSPPPTPQSPMQPLLSSQLQAEHTL.

Positions 1–266 are has GTPase activity, required for proper localization; that stretch reads MMMARKQDVR…IPYFEALKQQ (266 aa). GTP-binding positions include lysine 28, 33-37, leucine 52, serine 56, 95-97, 201-203, and 229-231; these read IGKSC, EQT, KCD, and SAR. FF domains are found at residues 270-327, 368-422, 429-483, and 485-550; these read IATA…HIHR, KLLE…HLEK, RAEM…HQKQ, and IDRA…HIHF. The residue at position 308 (tyrosine 308) is a Phosphotyrosine. Serine 589 is modified (phosphoserine). The pG1 pseudoGTPase domain occupies 592-767; the sequence is DLNIDRINLV…LLDSKRNLNL (176 aa). A phosphoserine mark is found at serine 770 and serine 773. The region spanning 783 to 947 is the pG2 pseudoGTPase domain; that stretch reads RIVMCLMCGD…FKDVVEKKNI (165 aa). A phosphoserine mark is found at serine 970, serine 975, serine 985, and serine 1072. Residue tyrosine 1087 is modified to Phosphotyrosine. Phosphotyrosine; by ABL2 and PTK6 is present on tyrosine 1105. Over residues 1124-1141 the composition is skewed to polar residues; that stretch reads KAQSNGSGNGSDSEMDTS. Positions 1124–1148 are disordered; sequence KAQSNGSGNGSDSEMDTSSLERGRK. Phosphoserine is present on residues serine 1134, serine 1142, serine 1150, serine 1176, serine 1179, and serine 1221. Positions 1177 to 1207 are disordered; that stretch reads VGSDDELGPIRKKEEDQASQGYKGDNAVIPY. The segment at 1213–1236 is required for phospholipid binding and regulation of the substrate preference; sequence PRRRNILRSLRRNTKKPKPKPRPS. Position 1226 is a phosphothreonine (threonine 1226). Phosphoserine is present on serine 1236. The 188-residue stretch at 1249–1436 folds into the Rho-GAP domain; it reads VPLTTVVTPE…LFIQQCPFFF (188 aa). Residues 1446-1499 form a disordered region; the sequence is GAAPGSPSAMAPTVPFLTSTPATSQPSPPQSPPPTPQSPMQPLLSSQLQAEHTL. Over residues 1448–1470 the composition is skewed to low complexity; it reads APGSPSAMAPTVPFLTSTPATSQ. Pro residues predominate over residues 1471–1484; sequence PSPPQSPPPTPQSP. Residues serine 1472 and serine 1476 each carry the phosphoserine modification. At threonine 1480 the chain carries Phosphothreonine. Position 1483 is a phosphoserine (serine 1483). A compositionally biased stretch (low complexity) spans 1485–1499; the sequence is MQPLLSSQLQAEHTL.

In terms of assembly, interacts with the general transcription factor GTF2I, the interaction sequesters GTF2I in the cytoplasm. Interacts with RASA1. Phosphorylation of Tyr-1105 by PTK6 promotes the association with RASA1, inactivating RHOA while activating RAS. Phosphorylation at Tyr-308 by PDGFRA inhibits binding to GTF2I. Phosphorylated by PRKCA at Ser-1221 and Thr-1226, induces relocalization from the cytoplasm to regions of plasma membrane ruffling and prevents the binding and substrate specificity regulation by phospholipids. In brain, phosphorylated by FYN and SRC. During focal adhesion formation, phosphorylated by MAPK1 and MAPK3 at the C-terminal region, probably at Ser-1451, Ser-1476, Thr-1480 and Ser-1483. Phosphorylation by MAPK1 and MAPK3 inhibits GAP function and localizes ARGHAP35 away from newly forming focal adhesions and stress fibers in cells spreading on fibronectin. Phosphorylation at Ser-1476 and Thr-1480 by GSK3B requires priming by MAPK and inhibits RhoGAP activity and modulates polarized cell migration. Expressed in the developing kidneys. Expressed in all regions of the mature nervous system (at protein level). Detected in neutrophils (at protein level).

It is found in the cytoplasm. It localises to the cytoskeleton. Its subcellular location is the cilium basal body. The protein localises to the nucleus. The protein resides in the cell membrane. Rho GTPase-activating protein (GAP). Binds several acidic phospholipids which inhibits the Rho GAP activity to promote the Rac GAP activity. This binding is inhibited by phosphorylation by PRKCA. Involved in cell differentiation as well as cell adhesion and migration, plays an important role in retinal tissue morphogenesis, neural tube fusion, midline fusion of the cerebral hemispheres and mammary gland branching morphogenesis. Transduces signals from p21-ras to the nucleus, acting via the ras GTPase-activating protein (GAP). Transduces SRC-dependent signals from cell-surface adhesion molecules, such as laminin, to promote neurite outgrowth. Regulates axon outgrowth, guidance and fasciculation. Modulates Rho GTPase-dependent F-actin polymerization, organization and assembly, is involved in polarized cell migration and in the positive regulation of ciliogenesis and cilia elongation. During mammary gland development, is required in both the epithelial and stromal compartments for ductal outgrowth. Represses transcription of the glucocorticoid receptor by binding to the cis-acting regulatory sequence 5'-GAGAAAAGAAACTGGAGAAACTC-3'; this function is however unclear and would need additional experimental evidences. The protein is Rho GTPase-activating protein 35 of Mus musculus (Mouse).